Consider the following 457-residue polypeptide: Argininosuccinate lyase (457 aa).

This sequence belongs to the lyase 1 family. Argininosuccinate lyase subfamily.

Its subcellular location is the cytoplasm. It carries out the reaction 2-(N(omega)-L-arginino)succinate = fumarate + L-arginine. It functions in the pathway amino-acid biosynthesis; L-arginine biosynthesis; L-arginine from L-ornithine and carbamoyl phosphate: step 3/3. In Bacillus pumilus (strain SAFR-032), this protein is Argininosuccinate lyase.